A 416-amino-acid chain; its full sequence is CinA-like protein (416 aa).

It belongs to the CinA family.

The sequence is that of CinA-like protein from Amoebophilus asiaticus (strain 5a2).